The primary structure comprises 201 residues: Dephospho-CoA kinase (201 aa).

A DPCK domain is found at 6–201 (VMGLTGSIGM…RAIREKNPRG (196 aa)). 14–19 (GMGKSA) serves as a coordination point for ATP.

It belongs to the CoaE family.

The protein resides in the cytoplasm. It catalyses the reaction 3'-dephospho-CoA + ATP = ADP + CoA + H(+). Its pathway is cofactor biosynthesis; coenzyme A biosynthesis; CoA from (R)-pantothenate: step 5/5. Catalyzes the phosphorylation of the 3'-hydroxyl group of dephosphocoenzyme A to form coenzyme A. In Novosphingobium aromaticivorans (strain ATCC 700278 / DSM 12444 / CCUG 56034 / CIP 105152 / NBRC 16084 / F199), this protein is Dephospho-CoA kinase.